The following is a 113-amino-acid chain: Ribulose bisphosphate carboxylase small subunit (113 aa).

It belongs to the RuBisCO small chain family. Heterohexadecamer of 8 large and 8 small subunits. RuBisCO interacts with the C-terminus of CcmM, and can be found in complexes that also include carbonic anhydrase (ccaA).

It is found in the carboxysome. RuBisCO catalyzes two reactions: the carboxylation of D-ribulose 1,5-bisphosphate, the primary event in carbon dioxide fixation, as well as the oxidative fragmentation of the pentose substrate in the photorespiration process. Both reactions occur simultaneously and in competition at the same active site. Although the small subunit is not catalytic it is essential for maximal activity. In Synechocystis sp. (strain ATCC 27184 / PCC 6803 / Kazusa), this protein is Ribulose bisphosphate carboxylase small subunit.